The chain runs to 412 residues: [Pyruvate dehydrogenase (acetyl-transferring)] kinase isozyme 4, mitochondrial (412 aa).

A Histidine kinase domain is found at 138–368; it reads ILEYKDNCTV…DAIIYLKALS (231 aa). ATP is bound by residues 254–261, aspartate 293, 312–313, and 329–334; these read ELFKNAMR, ST, and GFGYGL.

Belongs to the PDK/BCKDK protein kinase family. In terms of assembly, homodimer. Interacts with the pyruvate dehydrogenase complex subunit DLAT, and is part of the multimeric pyruvate dehydrogenase complex that contains multiple copies of pyruvate dehydrogenase (E1), dihydrolipoamide acetyltransferase (DLAT, E2) and lipoamide dehydrogenase (DLD, E3). Ubiquitous; highest levels of expression in heart and skeletal muscle.

The protein localises to the mitochondrion matrix. It carries out the reaction L-seryl-[pyruvate dehydrogenase E1 alpha subunit] + ATP = O-phospho-L-seryl-[pyruvate dehydrogenase E1 alpha subunit] + ADP + H(+). In terms of biological role, kinase that plays a key role in regulation of glucose and fatty acid metabolism and homeostasis via phosphorylation of the pyruvate dehydrogenase subunits PDHA1 and PDHA2. This inhibits pyruvate dehydrogenase activity, and thereby regulates metabolite flux through the tricarboxylic acid cycle, down-regulates aerobic respiration and inhibits the formation of acetyl-coenzyme A from pyruvate. Inhibition of pyruvate dehydrogenase decreases glucose utilization and increases fat metabolism in response to prolonged fasting and starvation. Plays an important role in maintaining normal blood glucose levels under starvation, and is involved in the insulin signaling cascade. Via its regulation of pyruvate dehydrogenase activity, plays an important role in maintaining normal blood pH and in preventing the accumulation of ketone bodies under starvation. In the fed state, mediates cellular responses to glucose levels and to a high-fat diet. Regulates both fatty acid oxidation and de novo fatty acid biosynthesis. Plays a role in the generation of reactive oxygen species. Protects detached epithelial cells against anoikis. Plays a role in cell proliferation via its role in regulating carbohydrate and fatty acid metabolism. The protein is [Pyruvate dehydrogenase (acetyl-transferring)] kinase isozyme 4, mitochondrial (Pdk4) of Rattus norvegicus (Rat).